A 541-amino-acid polypeptide reads, in one-letter code: Coiled-coil domain-containing protein 116 (541 aa).

A coiled-coil region spans residues 79–102; it reads QVLDSLQTVVEQATERLAAMKTEA. The tract at residues 346 to 397 is disordered; it reads LPGNSDLLQPSSKASIPTNREARGEPCDSLTTAYSPKTSHRKSKGRRGSPPN. Polar residues predominate over residues 351-363; it reads DLLQPSSKASIPT. A compositionally biased stretch (basic residues) spans 383–392; that stretch reads TSHRKSKGRR. The residue at position 394 (serine 394) is a Phosphoserine.

Its subcellular location is the cytoplasm. It localises to the cytoskeleton. It is found in the microtubule organizing center. The protein localises to the centrosome. This is Coiled-coil domain-containing protein 116 (Ccdc116) from Mus musculus (Mouse).